The chain runs to 43 residues: Defensin-A (43 aa).

3 disulfides stabilise this stretch: Cys3/Cys34, Cys20/Cys39, and Cys24/Cys41.

The protein localises to the secreted. In terms of biological role, antibacterial protein. Strong activity against the Gram-positive bacteria M.luteus, B.megaterium and S.aureus. Reduced activity against Gram-positive bacterium B.subtilis and weak activity against Gram-negative bacterium X.japonicus. No detectable activity against the Gram-negative bacteria E.asbriae, E.coli, P.aeruginosa and S.marcescens. The protein is Defensin-A of Anomala cuprea (Cupreous chafer beetle).